A 176-amino-acid chain; its full sequence is Trypsin inhibitor 1B (176 aa).

2 disulfides stabilise this stretch: cysteine 39/cysteine 83 and cysteine 132/cysteine 143.

It belongs to the protease inhibitor I3 (leguminous Kunitz-type inhibitor) family.

Inhibits trypsin stoichiometrically. The sequence is that of Trypsin inhibitor 1B from Erythrina variegata (Indian coral tree).